A 661-amino-acid chain; its full sequence is COBRA-like protein 7 (661 aa).

A signal peptide spans 1–26; that stretch reads MDSAPNFIPRLLLLSLLIVSIPLTSS. The tract at residues 26–45 is disordered; sequence SQSDANTTNPSPSPPSDSDL. Asparagine 31, asparagine 64, asparagine 122, asparagine 170, asparagine 314, asparagine 327, asparagine 356, asparagine 369, asparagine 398, asparagine 410, asparagine 430, asparagine 472, asparagine 551, and asparagine 561 each carry an N-linked (GlcNAc...) asparagine glycan. Residue serine 637 is the site of GPI-anchor amidated serine attachment. Residues 638-661 constitute a propeptide, removed in mature form; it reads SQHRKHISVFLLALPVLALLILRA.

This sequence belongs to the COBRA family. Expressed in roots, stems, leaves, flowers and siliques.

It is found in the cell membrane. This Arabidopsis thaliana (Mouse-ear cress) protein is COBRA-like protein 7 (COBL7).